Consider the following 107-residue polypeptide: uncharacterized protein (107 aa).

It localises to the mitochondrion. This is an uncharacterized protein from Arabidopsis thaliana (Mouse-ear cress).